The primary structure comprises 292 residues: Pantothenate synthetase (292 aa).

30–37 (MGFLHIGH) contributes to the ATP binding site. Catalysis depends on His37, which acts as the Proton donor. Gln61 is a (R)-pantoate binding site. Gln61 lines the beta-alanine pocket. 147–150 (GEKD) contributes to the ATP binding site. Gln153 serves as a coordination point for (R)-pantoate. ATP is bound by residues Val176 and 184–187 (CSSR).

The protein belongs to the pantothenate synthetase family. Homodimer.

It localises to the cytoplasm. It catalyses the reaction (R)-pantoate + beta-alanine + ATP = (R)-pantothenate + AMP + diphosphate + H(+). It participates in cofactor biosynthesis; (R)-pantothenate biosynthesis; (R)-pantothenate from (R)-pantoate and beta-alanine: step 1/1. Functionally, catalyzes the condensation of pantoate with beta-alanine in an ATP-dependent reaction via a pantoyl-adenylate intermediate. This Agrobacterium fabrum (strain C58 / ATCC 33970) (Agrobacterium tumefaciens (strain C58)) protein is Pantothenate synthetase.